Reading from the N-terminus, the 424-residue chain is CinA-like protein (424 aa).

This sequence belongs to the CinA family.

The chain is CinA-like protein from Prochlorococcus marinus (strain AS9601).